The chain runs to 470 residues: Pyruvate kinase I (470 aa).

Arginine 32 is a substrate binding site. Positions 34, 36, 66, and 67 each coordinate K(+). 34–37 (NFSH) is an ATP binding site. Residue arginine 73 coordinates ATP. Lysine 76 bears the N6-acetyllysine mark. ATP is bound at residue lysine 156. Glutamate 222 contributes to the Mg(2+) binding site. Residues glycine 245, aspartate 246, and threonine 278 each contribute to the substrate site. Residue aspartate 246 coordinates Mg(2+). N6-acetyllysine is present on lysine 319.

It belongs to the pyruvate kinase family. Homotetramer. Mg(2+) serves as cofactor. The cofactor is K(+).

The catalysed reaction is pyruvate + ATP = phosphoenolpyruvate + ADP + H(+). Its pathway is carbohydrate degradation; glycolysis; pyruvate from D-glyceraldehyde 3-phosphate: step 5/5. The chain is Pyruvate kinase I (pykF) from Escherichia coli O157:H7.